The chain runs to 490 residues: Betaine aldehyde dehydrogenase (490 aa).

K(+) is bound at residue aspartate 93. 150 to 152 (GAW) serves as a coordination point for NAD(+). Lysine 162 functions as the Charge relay system in the catalytic mechanism. Residue 176 to 179 (KPSE) coordinates NAD(+). Valine 180 contributes to the K(+) binding site. 230-233 (GIAS) contacts NAD(+). K(+) is bound at residue leucine 246. Glutamate 252 (proton acceptor) is an active-site residue. The NAD(+) site is built by glycine 254, cysteine 286, and glutamate 387. The Nucleophile role is filled by cysteine 286. A Cysteine sulfenic acid (-SOH) modification is found at cysteine 286. K(+) contacts are provided by lysine 457 and glycine 460. Glutamate 464 serves as the catalytic Charge relay system.

This sequence belongs to the aldehyde dehydrogenase family. In terms of assembly, dimer of dimers. It depends on K(+) as a cofactor.

It catalyses the reaction betaine aldehyde + NAD(+) + H2O = glycine betaine + NADH + 2 H(+). It functions in the pathway amine and polyamine biosynthesis; betaine biosynthesis via choline pathway; betaine from betaine aldehyde: step 1/1. Functionally, involved in the biosynthesis of the osmoprotectant glycine betaine. Catalyzes the irreversible oxidation of betaine aldehyde to the corresponding acid. The sequence is that of Betaine aldehyde dehydrogenase from Yersinia pseudotuberculosis serotype O:3 (strain YPIII).